Reading from the N-terminus, the 311-residue chain is tRNA dimethylallyltransferase (311 aa).

12–19 (GPTASGKT) serves as a coordination point for ATP. 14-19 (TASGKT) provides a ligand contact to substrate. 3 interaction with substrate tRNA regions span residues 37–40 (DSAL), 161–165 (QRINR), and 241–246 (RCVGYR).

This sequence belongs to the IPP transferase family. In terms of assembly, monomer. The cofactor is Mg(2+).

It carries out the reaction adenosine(37) in tRNA + dimethylallyl diphosphate = N(6)-dimethylallyladenosine(37) in tRNA + diphosphate. Functionally, catalyzes the transfer of a dimethylallyl group onto the adenine at position 37 in tRNAs that read codons beginning with uridine, leading to the formation of N6-(dimethylallyl)adenosine (i(6)A). This Histophilus somni (strain 129Pt) (Haemophilus somnus) protein is tRNA dimethylallyltransferase.